The following is a 562-amino-acid chain: Laccase-2 (562 aa).

Residues 1 to 26 (MASAASSLPLLVSSLLLALFALGAHA) form the signal peptide. 2 Plastocyanin-like domains span residues 34–150 (DIVM…PAAG) and 160–312 (DEAE…YAGV). N-linked (GlcNAc...) asparagine glycans are attached at residues asparagine 39, asparagine 53, asparagine 72, and asparagine 80. Cu cation-binding residues include histidine 84 and histidine 86. Asparagine 118 is a glycosylation site (N-linked (GlcNAc...) asparagine). The Cu cation site is built by histidine 129 and histidine 131. N-linked (GlcNAc...) asparagine glycans are attached at residues asparagine 189, asparagine 244, asparagine 300, asparagine 328, asparagine 376, asparagine 386, asparagine 421, and asparagine 445. In terms of domain architecture, Plastocyanin-like 3 spans 411 to 546 (DFPDRPPARF…KMAFLVEDGS (136 aa)). 7 residues coordinate Cu cation: histidine 463, histidine 466, histidine 468, histidine 525, cysteine 526, histidine 527, and histidine 531.

It belongs to the multicopper oxidase family. Requires Cu cation as cofactor.

It is found in the secreted. Its subcellular location is the extracellular space. The protein resides in the apoplast. The catalysed reaction is 4 hydroquinone + O2 = 4 benzosemiquinone + 2 H2O. Its function is as follows. Lignin degradation and detoxification of lignin-derived products. This Oryza sativa subsp. japonica (Rice) protein is Laccase-2 (LAC2).